The primary structure comprises 32 residues: Dermatoxin-J2 (32 aa).

Position 32 is a glutamine amide (glutamine 32).

In terms of tissue distribution, expressed by the skin glands.

The protein localises to the secreted. Functionally, antimicrobial peptide. In Phasmahyla jandaia (Jandaia leaf frog), this protein is Dermatoxin-J2.